Consider the following 342-residue polypeptide: D-erythrose-4-phosphate dehydrogenase (342 aa).

An NAD(+)-binding site is contributed by Arg-11–Val-12. Substrate contacts are provided by residues Ser-153–Thr-155, Arg-199, Thr-212–Lys-213, and Arg-235. The Nucleophile role is filled by Cys-154. Asn-317 serves as a coordination point for NAD(+).

Belongs to the glyceraldehyde-3-phosphate dehydrogenase family. Epd subfamily. Homotetramer.

Its subcellular location is the cytoplasm. It carries out the reaction D-erythrose 4-phosphate + NAD(+) + H2O = 4-phospho-D-erythronate + NADH + 2 H(+). It participates in cofactor biosynthesis; pyridoxine 5'-phosphate biosynthesis; pyridoxine 5'-phosphate from D-erythrose 4-phosphate: step 1/5. Its function is as follows. Catalyzes the NAD-dependent conversion of D-erythrose 4-phosphate to 4-phosphoerythronate. The protein is D-erythrose-4-phosphate dehydrogenase of Pseudoalteromonas atlantica (strain T6c / ATCC BAA-1087).